The sequence spans 160 residues: Prorelaxin (160 aa).

3 disulfide bridges follow: C10–C147, C22–C160, and C146–C151. Positions 34-133 (QEKQRILGSG…KDFNLNIYSP (100 aa)) are cleaved as a propeptide — connecting peptide.

The protein belongs to the insulin family. Heterodimer of a B chain and an A chain linked by two disulfide bonds. Expressed in the endometrium during pregnancy and in mammary gland during lactation.

The protein localises to the secreted. Functionally, relaxin is an ovarian hormone that acts with estrogen to produce dilatation of the birth canal in many mammals. It bears mature young, and allows separation of the pelvic bones. This chain is Prorelaxin (RLN), found in Cavia porcellus (Guinea pig).